Reading from the N-terminus, the 398-residue chain is Arylacetamide deacetylase (398 aa).

Residues 1 to 4 (GVKT) are Cytoplasmic-facing. A helical; Signal-anchor for type II membrane protein transmembrane segment spans residues 5 to 22 (VLLLIVGVLGAYYVYTPL). The Lumenal segment spans residues 23–398 (PDNIEEPWRL…QYFEWLRENV (376 aa)). The N-linked (GlcNAc...) asparagine glycan is linked to Asn-77. The Involved in the stabilization of the negatively charged intermediate by the formation of the oxyanion hole motif lies at 110-112 (HGG). Cys-115 and Cys-339 form a disulfide bridge. Ser-188 is a catalytic residue. Residue Asn-281 is glycosylated (N-linked (GlcNAc...) asparagine). Residues Asp-342 and His-372 contribute to the active site.

It belongs to the 'GDXG' lipolytic enzyme family. Post-translationally, glycosylated.

The protein resides in the endoplasmic reticulum membrane. It localises to the microsome membrane. The catalysed reaction is a triacylglycerol + H2O = a diacylglycerol + a fatty acid + H(+). Its activity is regulated as follows. Inhibited by diisopropylphosphofluoridate (DFP). Its function is as follows. Displays cellular triglyceride lipase activity in liver, increases the levels of intracellular fatty acids derived from the hydrolysis of newly formed triglyceride stores and plays a role in very low-density lipoprotein assembly. Displays serine esterase activity in liver. Deacetylates a variety of arylacetamide substrates, including xenobiotic compounds and procarcinogens, converting them to the primary arylamide compounds and increasing their toxicity. The sequence is that of Arylacetamide deacetylase from Oryctolagus cuniculus (Rabbit).